A 213-amino-acid polypeptide reads, in one-letter code: MKFSEEKNVSNNPTNFEGGLDSRKVGENRRALGVINQNLVVEGRPYPCVVNKRALSERNDVCEKKQADPVHRPITRRFAAKIASTKTSNAEGTTKRSNLAKSSSNGFGDFIFVDDEHKPVEDQPVPMALEQTEPMHSESDQMEEVEMEDIMEEPVMDIDTPDANDPLAVAEYIEDLYSYYRKVESTSCVSPNYMAQQFDINERMRAILVDCLL.

The interval 1–23 is disordered; the sequence is MKFSEEKNVSNNPTNFEGGLDSR.

This sequence belongs to the cyclin family. Cyclin AB subfamily. Interacts with the CDC2 protein kinase to form a serine/threonine kinase holoenzyme complex also known as maturation promoting factor (MPF). The cyclin subunit imparts substrate specificity to the complex. As to expression, only expressed in organs with dividing cells.

Its function is as follows. Essential for the control of the cell cycle at the G2/M (mitosis) transition. The sequence is that of G2/mitotic-specific cyclin-1 from Medicago sativa (Alfalfa).